The chain runs to 868 residues: Receptor-like protein kinase At5g59670 (868 aa).

Positions 1–22 are cleaved as a signal peptide; sequence MESSFGLLLALLTLTIIHIVQA. The Extracellular portion of the chain corresponds to 23-500; that stretch reads QDPQGFISLD…PRLIKPPKKE (478 aa). N-linked (GlcNAc...) asparagine glycans are attached at residues asparagine 38, asparagine 94, asparagine 141, asparagine 287, asparagine 300, asparagine 372, asparagine 405, asparagine 416, asparagine 423, asparagine 445, asparagine 464, and asparagine 471. 3 LRR repeats span residues 409–432, 433–459, and 461–481; these read PPRITSLNLSSSRLNGTIAAAIQS, ITQLETLDLSYNNLTGEVPEFLGKMKS, and SVINLSGNNLNGSIPQALRKK. A helical membrane pass occupies residues 501–521; that stretch reads FPVAIVTLVVFVTVIVVLFLV. At 522-868 the chain is on the cytoplasmic side; that stretch reads FRKKMSTIVK…LDTTAVPMAR (347 aa). Position 555 is a phosphothreonine (threonine 555). The Protein kinase domain maps to 564–834; it reads KNFQRVLGKG…SMSQVIHELK (271 aa). ATP contacts are provided by residues 570 to 578 and lysine 592; that span reads LGKGGFGMV. Tyrosine 637 carries the post-translational modification Phosphotyrosine. The active-site Proton acceptor is aspartate 689. A Phosphoserine modification is found at serine 723. Phosphothreonine is present on residues threonine 724 and threonine 729.

It belongs to the protein kinase superfamily. Ser/Thr protein kinase family. Autophosphorylated on Tyr and Thr residues.

Its subcellular location is the cell membrane. The catalysed reaction is L-seryl-[protein] + ATP = O-phospho-L-seryl-[protein] + ADP + H(+). It catalyses the reaction L-threonyl-[protein] + ATP = O-phospho-L-threonyl-[protein] + ADP + H(+). The enzyme catalyses L-tyrosyl-[protein] + ATP = O-phospho-L-tyrosyl-[protein] + ADP + H(+). In terms of biological role, probable receptor with a dual specificity kinase activity acting on both serine/threonine- and tyrosine-containing substrates. The protein is Receptor-like protein kinase At5g59670 of Arabidopsis thaliana (Mouse-ear cress).